The following is a 179-amino-acid chain: Casparian strip membrane protein 1 (179 aa).

Topologically, residues 1-17 (MKAGPLQLGVVPPANRA) are cytoplasmic. The helical transmembrane segment at 18-38 (IAILDFFLRPIAIVGTLASAI) threads the bilayer. Over 39–67 (AMATTNQTLPFFSQFIRFRAKFNDLPSFT) the chain is Extracellular. Residue asparagine 44 is glycosylated (N-linked (GlcNAc...) asparagine). The helical transmembrane segment at 68 to 88 (FFVVASSIVSAYLILSLGFSI) threads the bilayer. At 89–100 (LHIAKSNLVNSR) the chain is on the cytoplasmic side. Residues 101 to 121 (VLLLLLDTAAMGLLMAGSAAA) traverse the membrane as a helical segment. Residues 122 to 154 (TAIVQLAHKGNNKVNWFAICQQYNSFCKRVSGS) are Extracellular-facing. Residues 155–175 (LIGSYAGVVVLILLILLSGVA) form a helical membrane-spanning segment. Residues 176 to 179 (LSRR) are Cytoplasmic-facing.

It belongs to the Casparian strip membrane proteins (CASP) family. In terms of assembly, homodimer and heterodimers.

Its subcellular location is the cell membrane. In terms of biological role, regulates membrane-cell wall junctions and localized cell wall deposition. Required for establishment of the Casparian strip membrane domain (CSD) and the subsequent formation of Casparian strips, a cell wall modification of the root endodermis that determines an apoplastic barrier between the intraorganismal apoplasm and the extraorganismal apoplasm and prevents lateral diffusion. The protein is Casparian strip membrane protein 1 of Lactuca sativa (Garden lettuce).